The chain runs to 249 residues: Probable transcriptional regulatory protein ACIAD2052 (249 aa).

The protein belongs to the TACO1 family.

The protein resides in the cytoplasm. The polypeptide is Probable transcriptional regulatory protein ACIAD2052 (Acinetobacter baylyi (strain ATCC 33305 / BD413 / ADP1)).